Consider the following 329-residue polypeptide: Porphobilinogen deaminase (329 aa).

At cysteine 250 the chain carries S-(dipyrrolylmethanemethyl)cysteine.

The protein belongs to the HMBS family. As to quaternary structure, monomer. Dipyrromethane is required as a cofactor.

The catalysed reaction is 4 porphobilinogen + H2O = hydroxymethylbilane + 4 NH4(+). It participates in porphyrin-containing compound metabolism; protoporphyrin-IX biosynthesis; coproporphyrinogen-III from 5-aminolevulinate: step 2/4. Its function is as follows. Tetrapolymerization of the monopyrrole PBG into the hydroxymethylbilane pre-uroporphyrinogen in several discrete steps. This Burkholderia pseudomallei (strain 668) protein is Porphobilinogen deaminase.